Here is a 212-residue protein sequence, read N- to C-terminus: Large ribosomal subunit protein uL3 (212 aa).

Glutamine 154 is modified (N5-methylglutamine).

Belongs to the universal ribosomal protein uL3 family. As to quaternary structure, part of the 50S ribosomal subunit. Forms a cluster with proteins L14 and L19. Post-translationally, methylated by PrmB.

Functionally, one of the primary rRNA binding proteins, it binds directly near the 3'-end of the 23S rRNA, where it nucleates assembly of the 50S subunit. The chain is Large ribosomal subunit protein uL3 from Hydrogenovibrio crunogenus (strain DSM 25203 / XCL-2) (Thiomicrospira crunogena).